The sequence spans 505 residues: RNA-splicing ligase RtcB homolog (505 aa).

Mn(2+) contacts are provided by Asp119, Cys122, His227, His259, and His353. Residue 226–230 (NHYGE) coordinates GMP. GMP contacts are provided by residues 353 to 354 (HN), 402 to 405 (GGTM), Ser409, 428 to 431 (HGAG), and Lys504. His428 acts as the GMP-histidine intermediate in catalysis.

Belongs to the RtcB family. Catalytic component of the tRNA-splicing ligase complex. Mn(2+) is required as a cofactor.

The enzyme catalyses a 3'-end 3'-phospho-ribonucleotide-RNA + a 5'-end dephospho-ribonucleoside-RNA + GTP = a ribonucleotidyl-ribonucleotide-RNA + GMP + diphosphate. It carries out the reaction a 3'-end 2',3'-cyclophospho-ribonucleotide-RNA + a 5'-end dephospho-ribonucleoside-RNA + GTP + H2O = a ribonucleotidyl-ribonucleotide-RNA + GMP + diphosphate + H(+). Its function is as follows. Catalytic subunit of the tRNA-splicing ligase complex that acts by directly joining spliced tRNA halves to mature-sized tRNAs by incorporating the precursor-derived splice junction phosphate into the mature tRNA as a canonical 3',5'-phosphodiester. May act as an RNA ligase with broad substrate specificity, and may function toward other RNAs. This Brugia malayi (Filarial nematode worm) protein is RNA-splicing ligase RtcB homolog.